The sequence spans 395 residues: 1-deoxy-D-xylulose 5-phosphate reductoisomerase (395 aa).

Residues T15, G16, S17, I18, G41, N43, and N126 each coordinate NADPH. Residue K127 coordinates 1-deoxy-D-xylulose 5-phosphate. E128 serves as a coordination point for NADPH. D152 is a binding site for Mn(2+). Residues S153, E154, S178, and H201 each contribute to the 1-deoxy-D-xylulose 5-phosphate site. E154 serves as a coordination point for Mn(2+). Residue G207 participates in NADPH binding. 1-deoxy-D-xylulose 5-phosphate-binding residues include S214, N219, K220, and E223. E223 serves as a coordination point for Mn(2+).

The protein belongs to the DXR family. The cofactor is Mg(2+). Mn(2+) is required as a cofactor.

The enzyme catalyses 2-C-methyl-D-erythritol 4-phosphate + NADP(+) = 1-deoxy-D-xylulose 5-phosphate + NADPH + H(+). Its pathway is isoprenoid biosynthesis; isopentenyl diphosphate biosynthesis via DXP pathway; isopentenyl diphosphate from 1-deoxy-D-xylulose 5-phosphate: step 1/6. Functionally, catalyzes the NADPH-dependent rearrangement and reduction of 1-deoxy-D-xylulose-5-phosphate (DXP) to 2-C-methyl-D-erythritol 4-phosphate (MEP). The chain is 1-deoxy-D-xylulose 5-phosphate reductoisomerase from Ruegeria pomeroyi (strain ATCC 700808 / DSM 15171 / DSS-3) (Silicibacter pomeroyi).